Consider the following 347-residue polypeptide: Spermidine/putrescine import ATP-binding protein PotA (347 aa).

The region spanning 6–238 (LEIKNLSHYY…PKTKFVADFI (233 aa)) is the ABC transporter domain. 40–47 (GPSGCGKT) is a binding site for ATP.

Belongs to the ABC transporter superfamily. Spermidine/putrescine importer (TC 3.A.1.11.1) family. In terms of assembly, the complex is composed of two ATP-binding proteins (PotA), two transmembrane proteins (PotB and PotC) and a solute-binding protein (PotD).

It is found in the cell inner membrane. The catalysed reaction is ATP + H2O + polyamine-[polyamine-binding protein]Side 1 = ADP + phosphate + polyamineSide 2 + [polyamine-binding protein]Side 1.. Functionally, part of the ABC transporter complex PotABCD involved in spermidine/putrescine import. Responsible for energy coupling to the transport system. This Borreliella afzelii (strain PKo) (Borrelia afzelii) protein is Spermidine/putrescine import ATP-binding protein PotA.